Consider the following 213-residue polypeptide: Glycerol-3-phosphate acyltransferase (213 aa).

Helical transmembrane passes span Ile-3–Gly-23, Ile-55–Gly-75, Ser-80–Phe-100, Ala-110–Leu-130, Ser-142–Leu-162, and Leu-163–Phe-183.

Belongs to the PlsY family. In terms of assembly, probably interacts with PlsX.

Its subcellular location is the cell membrane. The enzyme catalyses an acyl phosphate + sn-glycerol 3-phosphate = a 1-acyl-sn-glycero-3-phosphate + phosphate. The protein operates within lipid metabolism; phospholipid metabolism. Functionally, catalyzes the transfer of an acyl group from acyl-phosphate (acyl-PO(4)) to glycerol-3-phosphate (G3P) to form lysophosphatidic acid (LPA). This enzyme utilizes acyl-phosphate as fatty acyl donor, but not acyl-CoA or acyl-ACP. This Streptococcus thermophilus (strain CNRZ 1066) protein is Glycerol-3-phosphate acyltransferase.